Reading from the N-terminus, the 807-residue chain is Maternal DNA replication licensing factor mcm3 (807 aa).

One can recognise an MCM domain in the interval 295 to 502; sequence IFEHLSKSLA…NDQEIADHVL (208 aa). 345–352 serves as a coordination point for ATP; that stretch reads GDPSVAKS. Positions 477–480 match the Arginine finger motif; sequence SRFD. The span at 664-673 shows a compositional bias: basic and acidic residues; it reads KTDKDLHDEN. The tract at residues 664–741 is disordered; that stretch reads KTDKDLHDEN…QDGKRSLSQN (78 aa). Residues 707 to 723 are compositionally biased toward polar residues; the sequence is FSEQDSSLNENLSQSLR. A compositionally biased stretch (basic and acidic residues) spans 727-741; sequence KKAESQDGKRSLSQN.

This sequence belongs to the MCM family. In terms of assembly, component of the mcm2-7 complex (RLF-M). The complex forms a toroidal hexameric ring with the proposed subunit order mcm2-mcm6-mcm4-mcm7-mcm3-mcm5. The heterodimer of mmcm3/mcm5 interacts with mcm4, mmcm6, mcm7 and weakly with mcm2. Interacts with mcm7, though this interaction may not be direct, and remains in a complex with mcm7 throughout the cell cycle. Component of the CMG helicase complex, composed of the mcm2-7 complex, the GINS complex and cdc45.

The protein localises to the nucleus. The protein resides in the chromosome. The enzyme catalyses ATP + H2O = ADP + phosphate + H(+). Acts as a component of the mcm2-7 complex (mcm complex) which is the putative replicative helicase essential for 'once per cell cycle' DNA replication initiation and elongation in eukaryotic cells. The active ATPase sites in the mcm2-7 ring are formed through the interaction surfaces of two neighboring subunits such that a critical structure of a conserved arginine finger motif is provided in trans relative to the ATP-binding site of the Walker A box of the adjacent subunit. The six ATPase active sites, however, are likely to contribute differentially to the complex helicase activity. The existence of maternal and zygotic forms of mcm3 and mcm6 suggests that specific forms of mcm2-7 complexes may be used during different stages of development. The polypeptide is Maternal DNA replication licensing factor mcm3 (mmcm3) (Xenopus laevis (African clawed frog)).